A 185-amino-acid chain; its full sequence is Ribosome-recycling factor (185 aa).

The interval 138 to 185 is disordered; sequence ALKKQEKDGEITEDEERRLEKEVQKVTDESTKKIDQMADNKRKEIIQG.

Belongs to the RRF family.

It localises to the cytoplasm. Its function is as follows. Responsible for the release of ribosomes from messenger RNA at the termination of protein biosynthesis. May increase the efficiency of translation by recycling ribosomes from one round of translation to another. The chain is Ribosome-recycling factor from Lactobacillus delbrueckii subsp. bulgaricus (strain ATCC BAA-365 / Lb-18).